We begin with the raw amino-acid sequence, 895 residues long: Dystroglycan 1 (895 aa).

The first 29 residues, Met1–Ser29, serve as a signal peptide directing secretion. A required for laminin recognition region spans residues His30–Pro408. The segment at Ser49–Thr71 is O-glycosylated at one site. Asn141 is a glycosylation site (N-linked (GlcNAc...) asparagine). A disulfide bridge connects residues Cys182 and Cys264. The tract at residues Ala316–Ser485 is mucin-like domain. Residues Thr317, Thr319, and Thr379 are each glycosylated (O-linked (Man6P...) threonine). The segment at Thr381–Lys500 is disordered. A compositionally biased stretch (polar residues) spans Ala393 to Pro403. Residues Pro413–Arg447 are compositionally biased toward low complexity. The O-glycosylated at seven sites with GalNAc stretch occupies residues Thr463–Ser485. Positions Lys603–Ser712 constitute a Peptidase S72 domain. N-linked (GlcNAc...) asparagine glycosylation is found at Asn641, Asn649, and Asn661. Over Ser654 to Val749 the chain is Extracellular. Cys669 and Cys713 are disulfide-bonded. Positions Pro724–Asp747 are disordered. Basic and acidic residues predominate over residues Val736–Asp747. The chain crosses the membrane as a helical span at residues Tyr750–Tyr775. The Nuclear localization signal motif lies at Arg776 to Lys782. The Cytoplasmic segment spans residues Arg776–Pro895. Thr790 carries the post-translational modification Phosphothreonine. The interval Leu819–Pro895 is required for interaction with CAV3. The tract at residues Lys823–Pro895 is disordered. Positions Pro832 to Thr846 are enriched in polar residues. A compositionally biased stretch (pro residues) spans Ser859–Thr870. The interval Pro880–Pro895 is required for binding DMD and UTRN. Positions Pro889–Tyr892 match the PPXY motif motif. The residue at position 892 (Tyr892) is a Phosphotyrosine; by SRC.

In terms of assembly, monomer. Heterodimer of alpha- and beta-dystroglycan subunits which are the central components of the dystrophin-glycoprotein complex. This complex then can form a dystrophin-associated glycoprotein complex (DGC) which is composed of three subcomplexes: a cytoplasmic complex comprised of DMD (or UTRN), DTNA and a number of syntrophins, such as SNTB1, SNTB2, SNTG1 and SNTG2, the transmembrane dystroglycan complex, and the sarcoglycan-sarcospan complex. Interacts (via the N-terminal of alphaDAG1) with LARGE1; the interaction enhances laminin binding. Interacts with SGCD. Interacts with AGR2 and AGR3. Interacts (betaDAG1) with DMD; the interaction is inhibited by phosphorylation on the PPXY motif. Interacts (betaDAG1, via its PPXY motif) with UTRN (via its WWW and ZZ domains); the interaction is inhibited by phosphorylation on the PPXY motif. Interacts (betaDAG1, via its phosphorylated PPXY motif) with the SH2 domain-containing proteins, FYN, CSK, NCK and SHC. Interacts (betaDAG1) with CAV3 (via a central WW-like domain); the interaction disrupts the binding of DMD. BetaDAG1 directly interacts with ANK3, but not with ANK2; this interaction does not interfere with DMD-binding and is required for retention at costameres. Identified in a dystroglycan complex that contains at least PRX, DRP2, UTRN, DMD and DAG1. Interacts with POMGNT1. BetaDAG1 interacts with CD93. Post-translationally, O-glycosylated. POMGNT1 catalyzes the initial addition of N-acetylglucosamine, giving rise to the GlcNAc(beta1-2)Man(alpha1-)O-Ser/Thr moiety and thus providing the necessary basis for the addition of further carbohydrate moieties. Heavily O-glycosylated comprising of up to two thirds of its mass and the carbohydrate composition differs depending on tissue type. Mucin-type O-glycosylation is important for ligand binding activity. O-mannosylation is found in high abundance in both brain and muscle where the most abundant glycan is Sia-alpha-2-3-Gal-beta-1-4-Glc-NAc-beta-1-2-Man. In muscle, glycosylation on Thr-317, Thr-319 and Thr-379 by a phosphorylated O-mannosyl glycan with the structure 2-(N-acetylamido)-2-deoxygalactosyl-beta-1,3-2-(N-acetylamido)-2-deoxyglucosyl-beta-1,4-6-phosphomannose is mediated by like-acetylglucosaminyltransferase (LARGE1) protein amd is required for laminin binding. O-glycosylated in the N-terminal region with a core 1 or possibly core 8 glycan. The brain form displays a unique glycosylation pattern which is absent in other tissues; this form shows enhanced binding to laminin LAMA5 compared to the skeletal muscle form. N-glycosylated. In terms of processing, autolytic cleavage produces the alpha and beta subunits. In cutaneous cells, as well as in certain pathological conditions, shedding of beta-dystroglycan can occur releasing a peptide of about 30 kDa. Post-translationally, SRC-mediated phosphorylation of the PPXY motif of the beta subunit recruits SH2 domain-containing proteins, but inhibits binding to WWW domain-containing proteins, DMD and UTRN. This phosphorylation also inhibits nuclear entry. As to expression, expressed in brain (at protein level). Expressed in the myelin sheath of peripheral nerves.

The protein resides in the secreted. It is found in the extracellular space. The protein localises to the cell membrane. Its subcellular location is the cytoplasm. It localises to the cytoskeleton. The protein resides in the nucleus. It is found in the nucleoplasm. The protein localises to the sarcolemma. Its subcellular location is the postsynaptic cell membrane. Functionally, the dystroglycan complex is involved in a number of processes including laminin and basement membrane assembly, sarcolemmal stability, cell survival, peripheral nerve myelination, nodal structure, cell migration, and epithelial polarization. In terms of biological role, extracellular peripheral glycoprotein that acts as a receptor for extracellular matrix proteins containing laminin-G domains. Receptor for laminin-2 (LAMA2) and agrin in peripheral nerve Schwann cells. Also acts as a receptor for laminin LAMA5. Its function is as follows. Transmembrane protein that plays important roles in connecting the extracellular matrix to the cytoskeleton. Acts as a cell adhesion receptor in both muscle and non-muscle tissues. Receptor for both DMD and UTRN and, through these interactions, scaffolds axin to the cytoskeleton. Also functions in cell adhesion-mediated signaling and implicated in cell polarity. The polypeptide is Dystroglycan 1 (Bos taurus (Bovine)).